Consider the following 600-residue polypeptide: Aspartate--tRNA(Asp/Asn) ligase (600 aa).

Residue Glu-174 participates in L-aspartate binding. Positions 198-201 (QLFK) are aspartate. Arg-220 is a binding site for L-aspartate. ATP is bound by residues 220 to 222 (RDE) and Gln-229. An L-aspartate-binding site is contributed by His-457. Position 491 (Glu-491) interacts with ATP. Position 498 (Arg-498) interacts with L-aspartate. 543–546 (GLDR) is an ATP binding site.

Belongs to the class-II aminoacyl-tRNA synthetase family. Type 1 subfamily. In terms of assembly, homodimer.

Its subcellular location is the cytoplasm. It catalyses the reaction tRNA(Asx) + L-aspartate + ATP = L-aspartyl-tRNA(Asx) + AMP + diphosphate. Its function is as follows. Aspartyl-tRNA synthetase with relaxed tRNA specificity since it is able to aspartylate not only its cognate tRNA(Asp) but also tRNA(Asn). Reaction proceeds in two steps: L-aspartate is first activated by ATP to form Asp-AMP and then transferred to the acceptor end of tRNA(Asp/Asn). This chain is Aspartate--tRNA(Asp/Asn) ligase, found in Burkholderia ambifaria (strain ATCC BAA-244 / DSM 16087 / CCUG 44356 / LMG 19182 / AMMD) (Burkholderia cepacia (strain AMMD)).